We begin with the raw amino-acid sequence, 133 residues long: Ribonuclease P protein component (133 aa).

This sequence belongs to the RnpA family. Consists of a catalytic RNA component (M1 or rnpB) and a protein subunit.

The catalysed reaction is Endonucleolytic cleavage of RNA, removing 5'-extranucleotides from tRNA precursor.. Its function is as follows. RNaseP catalyzes the removal of the 5'-leader sequence from pre-tRNA to produce the mature 5'-terminus. It can also cleave other RNA substrates such as 4.5S RNA. The protein component plays an auxiliary but essential role in vivo by binding to the 5'-leader sequence and broadening the substrate specificity of the ribozyme. The protein is Ribonuclease P protein component of Corynebacterium glutamicum (strain ATCC 13032 / DSM 20300 / JCM 1318 / BCRC 11384 / CCUG 27702 / LMG 3730 / NBRC 12168 / NCIMB 10025 / NRRL B-2784 / 534).